The following is a 453-amino-acid chain: Potassium/proton antiporter CemA (453 aa).

4 helical membrane passes run 235–255, 328–348, 378–398, and 414–434; these read YMAC…IIFL, ICTI…ACLL, ILLL…EIII, and VSCF…YWIF.

This sequence belongs to the CemA family.

It localises to the plastid. Its subcellular location is the chloroplast inner membrane. The enzyme catalyses K(+)(in) + H(+)(out) = K(+)(out) + H(+)(in). In terms of biological role, contributes to K(+)/H(+) antiport activity by supporting proton efflux to control proton extrusion and homeostasis in chloroplasts in a light-dependent manner to modulate photosynthesis. Prevents excessive induction of non-photochemical quenching (NPQ) under continuous-light conditions. Indirectly promotes efficient inorganic carbon uptake into chloroplasts. The protein is Potassium/proton antiporter CemA of Zygnema circumcarinatum (Green alga).